The following is a 326-amino-acid chain: Protein-arginine N-acetylglucosaminyltransferase NleB2 (326 aa).

Residues Gln-45–Phe-47, Tyr-69, and Tyr-216–Met-219 contribute to the UDP-N-acetyl-alpha-D-glucosamine site. A DXD motif motif is present at residues Asp-218–Asp-220. A Mn(2+)-binding site is contributed by Asp-220. Glu-250 functions as the Proton acceptor in the catalytic mechanism. Mn(2+) is bound by residues Asn-317 and Ser-319. Residues Ser-319 and Ser-324–Trp-326 contribute to the UDP-N-acetyl-alpha-D-glucosamine site.

It belongs to the glycosyltransferase NleB family. Requires Mn(2+) as cofactor.

The protein localises to the secreted. Its subcellular location is the host cell. The enzyme catalyses L-arginyl-[protein] + UDP-N-acetyl-alpha-D-glucosamine = N(omega)-(N-acetyl-beta-D-glucosaminyl)-L-arginyl-[protein] + UDP + H(+). Its function is as follows. Protein-arginine N-acetylglucosaminyltransferase effector that catalyzes the transfer of a single N-acetylglucosamine (GlcNAc) to a conserved arginine residue of host target proteins. In contrast to NleB1, not able to disrupt TNF signaling in infected cells. Shows a lower enzymatic activity than NleB1. This Escherichia coli O145:H28 (strain RM12581) protein is Protein-arginine N-acetylglucosaminyltransferase NleB2.